Here is a 360-residue protein sequence, read N- to C-terminus: Peptide chain release factor 1 (360 aa).

N5-methylglutamine is present on Gln235. The tract at residues Glu284 to Tyr312 is disordered.

Belongs to the prokaryotic/mitochondrial release factor family. Post-translationally, methylated by PrmC. Methylation increases the termination efficiency of RF1.

It localises to the cytoplasm. Peptide chain release factor 1 directs the termination of translation in response to the peptide chain termination codons UAG and UAA. This chain is Peptide chain release factor 1, found in Histophilus somni (strain 129Pt) (Haemophilus somnus).